Consider the following 374-residue polypeptide: 2-oxoglutarate-Fe(II) type oxidoreductase ppzC (374 aa).

The tract at residues lysine 111 to glutamate 131 is disordered. The Fe2OG dioxygenase domain occupies tyrosine 220–phenylalanine 330. Histidine 254, aspartate 256, and histidine 311 together coordinate Fe cation. Position 321 (arginine 321) interacts with 2-oxoglutarate.

Belongs to the iron/ascorbate-dependent oxidoreductase family. Fe(2+) serves as cofactor.

It carries out the reaction peramine + 2-oxoglutarate + O2 = 8-hydroxyperamine + succinate + CO2. It participates in secondary metabolite biosynthesis. Its function is as follows. 2-oxoglutarate-Fe(II) type oxidoreductase; part of the gene cluster that mediates the biosynthesis of pyrrolopyrazines, secondary metabolites showing insecticidal activity. Within the pathway, ppzC uses peramine as substrate for hydroxylation to yield the novel analog 8-hydroxyperamine. The single multifunctional NRPS ppzA is sufficient to produce peramine via condensation of 1-pyrroline-5-carboxylate and arginine, N-methylation of the alpha-amino group of arginine and reduction of the thioester and the cyclization to form an iminium ion resulting in release from the peptide synthetase. Deprotonation of this intermediate and oxidation of the pyrroline ring would give rise to peramine. In Epichloe species that produce only peramine, the peramine synthetase gene is not localized in a gene cluster, in contrast to Metarhizium species that contain additional pyrrolopyrazine biosynthesis genes. The 2-oxoglutarate-Fe(II) type oxidoreductase ppzC hydroxylates peramine to yield the newly identified compound 8-hydroxyperamine whereas ppzD converts L-proline into trans-4-hydroxy-L-proline, a precursor of peramine biosynthesis. The protein is 2-oxoglutarate-Fe(II) type oxidoreductase ppzC (ppzC) of Metarhizium majus (strain ARSEF 297).